The primary structure comprises 335 residues: Agamous-like MADS-box protein AGL104 (335 aa).

An MADS-box domain is found at 1–61; sequence MGRVKLEIKR…DRLSLFSGKT (61 aa). Residues 124–151 adopt a coiled-coil conformation; it reads SDVEELEHEVCRLQQQLQMAEEELRRYE. Residues 302 to 335 are disordered; sequence MPAQQSDIPGVTAETQVDHEVSDYETKVPQLSSQ. The span at 317-327 shows a compositional bias: basic and acidic residues; the sequence is QVDHEVSDYET.

As to quaternary structure, forms heterodimers with AGL30 and AGL65. As to expression, expressed in pollen.

The protein localises to the nucleus. Functionally, probable transcription factor that forms heterodimers with the MADS-box proteins AGL30 and AGL65 and is involved in the regulation of pollen maturation at the late stages of pollen development and pollen tube growth. This is Agamous-like MADS-box protein AGL104 from Arabidopsis thaliana (Mouse-ear cress).